Reading from the N-terminus, the 57-residue chain is Mambaquaretin-6 (57 aa).

Residues 5 to 55 (CNLPVKPGPCSGFFSAFYYSQKTNKCHSFTYGGCRGPGNRFRTIEECRRTC) enclose the BPTI/Kunitz inhibitor domain. Intrachain disulfides connect Cys-5/Cys-55, Cys-14/Cys-38, and Cys-30/Cys-51.

Belongs to the venom Kunitz-type family. In terms of tissue distribution, expressed by the venom gland.

The protein localises to the secreted. Interacts with vasopressin V2 receptor (V2R/AVPR2), probably in a selective manner. Inhibits vasopressin binding human V2R in the nanomolar range (Ki=21.5 nM), and also moderately inhibits vasopressin-induced cAMP production (IC(50)=574 nM). In vivo, intraperitoneal injection of this protein into rats increases diuresis by 2-fold, without any loss of electrolytes. The sequence is that of Mambaquaretin-6 from Dendroaspis viridis (Western green mamba).